Consider the following 277-residue polypeptide: 4-hydroxy-tetrahydrodipicolinate reductase (277 aa).

9 to 14 (GATGRM) contacts NAD(+). Lysine 37 contacts NADP(+). 75 to 77 (GTS) lines the NAD(+) pocket. The active-site Proton donor/acceptor is histidine 132. Residue lysine 136 is the Proton donor of the active site. 142 to 143 (GT) is a binding site for (S)-2,3,4,5-tetrahydrodipicolinate. Disordered stretches follow at residues 154–173 (ARGARGPVQAPHTDQRARGQ) and 247–277 (ERAAQAAAGDAPSGPVDDGGPSGQAATVTSA). Positions 250-265 (AQAAAGDAPSGPVDDG) are enriched in low complexity.

This sequence belongs to the DapB family.

Its subcellular location is the cytoplasm. The catalysed reaction is (S)-2,3,4,5-tetrahydrodipicolinate + NAD(+) + H2O = (2S,4S)-4-hydroxy-2,3,4,5-tetrahydrodipicolinate + NADH + H(+). It carries out the reaction (S)-2,3,4,5-tetrahydrodipicolinate + NADP(+) + H2O = (2S,4S)-4-hydroxy-2,3,4,5-tetrahydrodipicolinate + NADPH + H(+). The protein operates within amino-acid biosynthesis; L-lysine biosynthesis via DAP pathway; (S)-tetrahydrodipicolinate from L-aspartate: step 4/4. Functionally, catalyzes the conversion of 4-hydroxy-tetrahydrodipicolinate (HTPA) to tetrahydrodipicolinate. In Clavibacter michiganensis subsp. michiganensis (strain NCPPB 382), this protein is 4-hydroxy-tetrahydrodipicolinate reductase.